A 298-amino-acid polypeptide reads, in one-letter code: Putative F-box and FNIP repeat-containing protein R286 (298 aa).

Residues 4-48 (LNVLESHVILHIIEFLPDHEKIKFMSTCKSLYEFRCHVTYNNFYV) enclose the F-box domain. FNIP repeat units follow at residues 124 to 165 (FNKP…LGHN) and 255 to 297 (WNFD…FISR).

This Acanthamoeba polyphaga (Amoeba) protein is Putative F-box and FNIP repeat-containing protein R286.